A 177-amino-acid polypeptide reads, in one-letter code: Putative 3-methyladenine DNA glycosylase (177 aa).

The protein belongs to the DNA glycosylase MPG family.

This Rickettsia felis (strain ATCC VR-1525 / URRWXCal2) (Rickettsia azadi) protein is Putative 3-methyladenine DNA glycosylase.